The primary structure comprises 1976 residues: Myosin-10 (1976 aa).

Residue Arg-18 is modified to Omega-N-methylarginine. Residues 31-81 (TAKKLVWIPSERHGFEAASIKEERGDEVMVELAENGKKAMVNKDDIQKMNP) enclose the Myosin N-terminal SH3-like domain. The Myosin motor domain occupies 85 to 783 (SKVEDMAELT…VLAHLEEERD (699 aa)). 178 to 185 (GESGAGKT) is an ATP binding site. An N6-acetyllysine modification is found at Lys-442. Residues 661–683 (LTKLMATLRNTNPNFVRCIIPNH) form an actin-binding region. The IQ domain occupies 786 to 815 (ITDIIIFFQAVCRGYLARKAFAKKQQQLSA). Residues 845–1976 (LQVTRQEEEL…VNDTQPPQSE (1132 aa)) adopt a coiled-coil conformation. The disordered stretch occupies residues 1125 to 1175 (EDFESEKASRNKAEKQKRDLSEELEALKTELEDTLDTTAAQQELRTKREQE). A compositionally biased stretch (basic and acidic residues) spans 1129–1155 (SEKASRNKAEKQKRDLSEELEALKTEL). Position 1145 is a phosphoserine (Ser-1145). Lys-1241, Lys-1301, and Lys-1645 each carry N6-acetyllysine. Disordered stretches follow at residues 1697–1718 (ASSE…DEIA) and 1874–1976 (KANA…PQSE). Over residues 1698-1708 (SSERARRHAEQ) the composition is skewed to basic and acidic residues. An Omega-N-methylarginine modification is found at Arg-1930. Residues Ser-1935, Ser-1937, Ser-1938, and Ser-1939 each carry the phosphoserine modification. Arg-1940 is subject to Omega-N-methylarginine. A phosphoserine mark is found at Ser-1952 and Ser-1956. Phosphothreonine is present on Thr-1960. Over residues 1967-1976 (VNDTQPPQSE) the composition is skewed to polar residues. Ser-1975 is subject to Phosphoserine.

This sequence belongs to the TRAFAC class myosin-kinesin ATPase superfamily. Myosin family. As to quaternary structure, myosin is a hexameric protein that consists of 2 heavy chain subunits (MHC), 2 alkali light chain subunits (MLC) and 2 regulatory light chain subunits (MLC-2). Interacts with PLEKHG6. Interacts with ECPAS. Interacts with LARP6. Interacts with MCC. Interacts with KIF26B. Interacts with CFAP95. In terms of processing, phosphorylated by ABL2. As to expression, in newborn kidney, expressed in the mesenchyme and ureteric buds.

It is found in the cell projection. The protein resides in the lamellipodium. In terms of biological role, involved with LARP6 in the stabilization of type I collagen mRNAs for CO1A1 and CO1A2. During cell spreading, plays an important role in cytoskeleton reorganization, focal contacts formation (in the central part but not the margins of spreading cells), and lamellipodial extension; this function is mechanically antagonized by MYH9. Cellular myosin that appears to play a role in cytokinesis, cell shape, and specialized functions such as secretion and capping. This is Myosin-10 (Myh10) from Mus musculus (Mouse).